The chain runs to 710 residues: Polyribonucleotide nucleotidyltransferase (710 aa).

Mg(2+) is bound by residues D487 and D493. One can recognise a KH domain in the interval 554–613; that stretch reads PRIHTMKISAEKIKDVIGKGGAVIRALTEETGTTIEIEDDGTIKIAATEGAAAKEAIRRI. Residues 623 to 691 form the S1 motif domain; sequence GRIYTGKVAR…RQGRVRLSMK (69 aa). The interval 691-710 is disordered; it reads KEAVEKPAEEANDASEAKGE.

This sequence belongs to the polyribonucleotide nucleotidyltransferase family. As to quaternary structure, component of the RNA degradosome, which is a multiprotein complex involved in RNA processing and mRNA degradation. Requires Mg(2+) as cofactor.

The protein resides in the cytoplasm. The catalysed reaction is RNA(n+1) + phosphate = RNA(n) + a ribonucleoside 5'-diphosphate. Functionally, involved in mRNA degradation. Catalyzes the phosphorolysis of single-stranded polyribonucleotides processively in the 3'- to 5'-direction. In Vibrio campbellii (strain ATCC BAA-1116), this protein is Polyribonucleotide nucleotidyltransferase.